We begin with the raw amino-acid sequence, 239 residues long: Probable 2-phosphosulfolactate phosphatase (239 aa).

Belongs to the ComB family. Requires Mg(2+) as cofactor.

The catalysed reaction is (2R)-O-phospho-3-sulfolactate + H2O = (2R)-3-sulfolactate + phosphate. The protein is Probable 2-phosphosulfolactate phosphatase of Clostridium botulinum (strain 657 / Type Ba4).